Here is a 245-residue protein sequence, read N- to C-terminus: Probable phosphatase YpAngola_A2446 (245 aa).

9 residues coordinate Zn(2+): H7, H9, H15, H40, E73, H101, H131, D192, and H194.

The protein belongs to the PHP family. In terms of assembly, homotrimer. Requires Zn(2+) as cofactor.

The sequence is that of Probable phosphatase YpAngola_A2446 from Yersinia pestis bv. Antiqua (strain Angola).